We begin with the raw amino-acid sequence, 146 residues long: Large ribosomal subunit protein uL15 (146 aa).

Positions 1–54 (MTLRLNELAPAEGAKRDNRRLGRGIGSGVGKTGGRGVKGQKSRKSGGVRPGFEG) are disordered. A compositionally biased stretch (gly residues) spans 23-37 (RGIGSGVGKTGGRGV).

It belongs to the universal ribosomal protein uL15 family. Part of the 50S ribosomal subunit.

Binds to the 23S rRNA. This Acinetobacter baylyi (strain ATCC 33305 / BD413 / ADP1) protein is Large ribosomal subunit protein uL15.